The following is a 140-amino-acid chain: Putative pre-16S rRNA nuclease (140 aa).

This sequence belongs to the YqgF nuclease family.

The protein resides in the cytoplasm. In terms of biological role, could be a nuclease involved in processing of the 5'-end of pre-16S rRNA. This is Putative pre-16S rRNA nuclease from Actinobacillus succinogenes (strain ATCC 55618 / DSM 22257 / CCUG 43843 / 130Z).